A 318-amino-acid chain; its full sequence is Glutathione synthetase (318 aa).

Residues 129-314 enclose the ATP-grasp domain; that stretch reads KLAITEFPDL…VPEMFAVALE (186 aa). Position 155–211 (155–211) interacts with ATP; the sequence is HAAQGDVIVKPLDGMGGTGIFRLQRSEPNLNAILETLTDNGTRTIMAQRYIPEIVKG. 2 residues coordinate Mg(2+): E285 and N287.

The protein belongs to the prokaryotic GSH synthase family. The cofactor is Mg(2+). Mn(2+) serves as cofactor.

The catalysed reaction is gamma-L-glutamyl-L-cysteine + glycine + ATP = glutathione + ADP + phosphate + H(+). The protein operates within sulfur metabolism; glutathione biosynthesis; glutathione from L-cysteine and L-glutamate: step 2/2. The sequence is that of Glutathione synthetase from Bordetella bronchiseptica (strain ATCC BAA-588 / NCTC 13252 / RB50) (Alcaligenes bronchisepticus).